The sequence spans 364 residues: tRNA 2-selenouridine synthase (364 aa).

A Rhodanese domain is found at L14–I137. Residue C97 is the S-selanylcysteine intermediate of the active site.

The protein belongs to the SelU family. Monomer.

It catalyses the reaction 5-methylaminomethyl-2-thiouridine(34) in tRNA + selenophosphate + (2E)-geranyl diphosphate + H2O + H(+) = 5-methylaminomethyl-2-selenouridine(34) in tRNA + (2E)-thiogeraniol + phosphate + diphosphate. The catalysed reaction is 5-methylaminomethyl-2-thiouridine(34) in tRNA + (2E)-geranyl diphosphate = 5-methylaminomethyl-S-(2E)-geranyl-thiouridine(34) in tRNA + diphosphate. It carries out the reaction 5-methylaminomethyl-S-(2E)-geranyl-thiouridine(34) in tRNA + selenophosphate + H(+) = 5-methylaminomethyl-2-(Se-phospho)selenouridine(34) in tRNA + (2E)-thiogeraniol. The enzyme catalyses 5-methylaminomethyl-2-(Se-phospho)selenouridine(34) in tRNA + H2O = 5-methylaminomethyl-2-selenouridine(34) in tRNA + phosphate. In terms of biological role, involved in the post-transcriptional modification of the uridine at the wobble position (U34) of tRNA(Lys), tRNA(Glu) and tRNA(Gln). Catalyzes the conversion of 2-thiouridine (S2U-RNA) to 2-selenouridine (Se2U-RNA). Acts in a two-step process involving geranylation of 2-thiouridine (S2U) to S-geranyl-2-thiouridine (geS2U) and subsequent selenation of the latter derivative to 2-selenouridine (Se2U) in the tRNA chain. The chain is tRNA 2-selenouridine synthase from Shigella flexneri.